Here is a 526-residue protein sequence, read N- to C-terminus: Outer capsid protein VP5 (526 aa).

Residues 1-42 (MGKVIRSLNRFGKKVGNALTSNTAKKIYSTIGKAADEFLESE) are involved in membrane permeabilization.

It belongs to the orbivirus VP5 family.

It is found in the virion. In terms of biological role, VP5 protein is one of the two proteins (with VP2) which constitute the virus particle outer capsid. Acts as a membrane permeabilization protein that mediates release of viral particles from endosomal compartments into the cytoplasm. Permeabilization activity is probably negatively regulated by VP2 and is triggered by endosomal degradation of VP2 and exposure to low pH. The protein is Outer capsid protein VP5 (Segment-6) of Bluetongue virus 1 (isolate South Africa) (BTV 1).